Reading from the N-terminus, the 507-residue chain is ATP synthase subunit alpha, chloroplastic (507 aa).

Residue 170–177 (GDRQTGKT) participates in ATP binding.

Belongs to the ATPase alpha/beta chains family. F-type ATPases have 2 components, CF(1) - the catalytic core - and CF(0) - the membrane proton channel. CF(1) has five subunits: alpha(3), beta(3), gamma(1), delta(1), epsilon(1). CF(0) has four main subunits: a, b, b' and c.

Its subcellular location is the plastid. The protein localises to the chloroplast thylakoid membrane. The enzyme catalyses ATP + H2O + 4 H(+)(in) = ADP + phosphate + 5 H(+)(out). In terms of biological role, produces ATP from ADP in the presence of a proton gradient across the membrane. The alpha chain is a regulatory subunit. The sequence is that of ATP synthase subunit alpha, chloroplastic from Drimys granadensis.